The sequence spans 456 residues: GTPase Der (456 aa).

EngA-type G domains lie at 4 to 169 (PIVA…PAVE) and 177 to 352 (IKVA…ESHK). GTP-binding positions include 10 to 17 (GRPNVGKS), 57 to 61 (DTGGL), 120 to 123 (NKCE), 183 to 190 (GRPNVGKS), 230 to 234 (DTAGI), and 295 to 298 (NKWD). The 86-residue stretch at 353-438 (RRVSTSVINE…PIILLWRSKK (86 aa)) folds into the KH-like domain.

This sequence belongs to the TRAFAC class TrmE-Era-EngA-EngB-Septin-like GTPase superfamily. EngA (Der) GTPase family. In terms of assembly, associates with the 50S ribosomal subunit.

In terms of biological role, GTPase that plays an essential role in the late steps of ribosome biogenesis. In Nostoc punctiforme (strain ATCC 29133 / PCC 73102), this protein is GTPase Der.